We begin with the raw amino-acid sequence, 180 residues long: Large ribosomal subunit protein uL5 (180 aa).

This sequence belongs to the universal ribosomal protein uL5 family. As to quaternary structure, part of the 50S ribosomal subunit; part of the 5S rRNA/L5/L18/L25 subcomplex. Contacts the 5S rRNA and the P site tRNA. Forms a bridge to the 30S subunit in the 70S ribosome.

In terms of biological role, this is one of the proteins that bind and probably mediate the attachment of the 5S RNA into the large ribosomal subunit, where it forms part of the central protuberance. In the 70S ribosome it contacts protein S13 of the 30S subunit (bridge B1b), connecting the 2 subunits; this bridge is implicated in subunit movement. Contacts the P site tRNA; the 5S rRNA and some of its associated proteins might help stabilize positioning of ribosome-bound tRNAs. The polypeptide is Large ribosomal subunit protein uL5 (Streptococcus pneumoniae (strain JJA)).